The primary structure comprises 520 residues: Zinc finger and BTB domain-containing protein 45 (520 aa).

Residues Cys-33–Gln-96 form the BTB domain. Disordered regions lie at residues Pro-182–Gly-272 and Phe-337–Ala-372. The segment covering Arg-206–Glu-225 has biased composition (acidic residues). Over residues Pro-342–Phe-363 the composition is skewed to pro residues. 4 consecutive C2H2-type zinc fingers follow at residues Tyr-412 to His-434, His-440 to His-462, Phe-468 to His-490, and Ala-495 to His-517.

Belongs to the krueppel C2H2-type zinc-finger protein family.

It localises to the nucleus. May be involved in transcriptional regulation. In the central nervous system, may play a role in glial cell differentiation. The chain is Zinc finger and BTB domain-containing protein 45 from Mus musculus (Mouse).